A 229-amino-acid chain; its full sequence is Non-structural protein V (229 aa).

Residues 28-115 (LGATSQPPPN…DTQSPSPSKT (88 aa)) are disordered. Basic and acidic residues predominate over residues 45-55 (KTEENNDETRT). Positions 59 to 71 (SASAEAPAHASSP) are enriched in low complexity. Composition is skewed to polar residues over residues 82–97 (GKQS…NRPQ) and 105–115 (SDTQSPSPSKT). Zn(2+) contacts are provided by His178, Cys197, Cys201, Cys213, Cys215, Cys218, Cys222, and Cys225.

Belongs to the paramyxoviruses V protein family.

Blocks host interferon signaling. The protein is Non-structural protein V (P/V) of Human parainfluenza 4b virus (strain 68-333) (HPIV-4b).